The chain runs to 574 residues: K(+)/H(+) antiporter NhaP2 (574 aa).

Transmembrane regions (helical) follow at residues isoleucine 6–methionine 26, leucine 30–leucine 50, tyrosine 58–methionine 78, valine 87–threonine 107, leucine 109–valine 129, isoleucine 173–isoleucine 193, phenylalanine 196–leucine 216, leucine 219–serine 239, leucine 242–threonine 262, valine 271–leucine 291, isoleucine 299–valine 319, tryptophan 335–methionine 355, and leucine 359–isoleucine 379. Positions serine 405 to glutamine 486 constitute an RCK C-terminal domain.

It belongs to the monovalent cation:proton antiporter 1 (CPA1) transporter (TC 2.A.36) family. NhaP2 subfamily.

It localises to the cell inner membrane. The catalysed reaction is K(+)(in) + H(+)(out) = K(+)(out) + H(+)(in). Its function is as follows. K(+)/H(+) antiporter that extrudes potassium in exchange for external protons and maintains the internal concentration of potassium under toxic levels. The chain is K(+)/H(+) antiporter NhaP2 from Shewanella sp. (strain W3-18-1).